Reading from the N-terminus, the 346-residue chain is L-threonine dehydratase catabolic TdcB (346 aa).

An AMP-binding site is contributed by 59 to 60 (FT). N6-(pyridoxal phosphate)lysine is present on Lys64. AMP-binding positions include Gln94, 125 to 126 (GY), and Asn321.

It belongs to the serine/threonine dehydratase family. As to quaternary structure, in the native structure, TdcB is in a dimeric form, whereas in the TdcB-AMP complex, it exists in a tetrameric form (dimer of dimers). Pyridoxal 5'-phosphate serves as cofactor.

The enzyme catalyses L-threonine = 2-oxobutanoate + NH4(+). It functions in the pathway amino-acid degradation; L-threonine degradation via propanoate pathway; propanoate from L-threonine: step 1/4. Each protein molecule can bind up to four molecules of AMP, which act as an allosteric activator to the enzyme. In terms of biological role, catalyzes the anaerobic formation of alpha-ketobutyrate and ammonia from threonine in a two-step reaction. The first step involved a dehydration of threonine and a production of enamine intermediates (aminocrotonate), which tautomerizes to its imine form (iminobutyrate). Both intermediates are unstable and short-lived. The second step is the nonenzymatic hydrolysis of the enamine/imine intermediates to form 2-ketobutyrate and free ammonia. In the low water environment of the cell, the second step is accelerated by RidA. The protein is L-threonine dehydratase catabolic TdcB (tdcB) of Staphylococcus aureus (strain Mu50 / ATCC 700699).